Here is a 466-residue protein sequence, read N- to C-terminus: Pentatricopeptide repeat-containing protein At4g01400, mitochondrial (466 aa).

The N-terminal 34 residues, 1–34 (MIRRPIYDFAAVFRHLTSPLSTSSRFLFYSSSEH), are a transit peptide targeting the mitochondrion. 8 PPR repeats span residues 118–152 (TGEI…NFTP), 153–188 (QPKH…GVMP), 189–223 (NTRS…DVVP), 224–258 (DVDS…GFVP), 259–293 (DRLS…GCNP), 294–328 (DLVH…GCSP), 329–363 (NSVS…GFSP), and 364–398 (HFSV…GETL).

It belongs to the PPR family. P subfamily.

Its subcellular location is the mitochondrion. The protein is Pentatricopeptide repeat-containing protein At4g01400, mitochondrial of Arabidopsis thaliana (Mouse-ear cress).